The primary structure comprises 329 residues: Beta-ketoacyl-[acyl-carrier-protein] synthase III (329 aa).

Residues Cys113 and His255 contribute to the active site. An ACP-binding region spans residues 256–260; that stretch reads QANQR. Residue Asn285 is part of the active site.

This sequence belongs to the thiolase-like superfamily. FabH family. Homodimer.

The protein resides in the cytoplasm. It catalyses the reaction malonyl-[ACP] + acetyl-CoA + H(+) = 3-oxobutanoyl-[ACP] + CO2 + CoA. It participates in lipid metabolism; fatty acid biosynthesis. Catalyzes the condensation reaction of fatty acid synthesis by the addition to an acyl acceptor of two carbons from malonyl-ACP. Catalyzes the first condensation reaction which initiates fatty acid synthesis and may therefore play a role in governing the total rate of fatty acid production. Possesses both acetoacetyl-ACP synthase and acetyl transacylase activities. Its substrate specificity determines the biosynthesis of branched-chain and/or straight-chain of fatty acids. The chain is Beta-ketoacyl-[acyl-carrier-protein] synthase III from Chlorobium phaeobacteroides (strain DSM 266 / SMG 266 / 2430).